A 38-amino-acid chain; its full sequence is Conotoxin FVIA (38 aa).

The propeptide occupies 1–12 (ILSLSLLDRSTR). Disulfide bonds link cysteine 13–cysteine 28, cysteine 20–cysteine 32, and cysteine 27–cysteine 37. Residue cysteine 37 is modified to Cysteine amide.

This sequence belongs to the conotoxin O1 superfamily. As to expression, expressed by the venom duct.

Its subcellular location is the secreted. Its function is as follows. Omega-conotoxins act at presynaptic membranes, they bind and block voltage-gated calcium channels (Cav). This peptide reversibly and selectively inhibits Cav2.2/CACNA1B (IC(50)=11.5 nM) voltage-gated calcium channels. Channel time recovery after toxin exposure is short (about 50 seconds). In vivo, it effectively and dose-dependently reduces nociceptive behavior in the formalin test and in neuropathic pain models, and reduces mechanical and thermal allodynia in the tail nerve injury rat model. It also shows significant analgesic effects on writhing in mouse neurotransmitter- and cytokine-induced pain models, though it has no effect on acute thermal pain and interferon-gamma-induced pain. It also depresses blood pressure immediately after administration, but pressure recovers relatively quickly and completely. The sequence is that of Conotoxin FVIA from Conus fulmen (Thunderbolt cone).